The sequence spans 282 residues: Probable transcription factor At1g66420 (282 aa).

A disordered region spans residues 33-73 (SKKNEEFCGGSGKVQPSEMKRRSEGTSTDMTSKRAKKVSAE).

Belongs to the GeBP family.

This chain is Probable transcription factor At1g66420, found in Arabidopsis thaliana (Mouse-ear cress).